A 294-amino-acid polypeptide reads, in one-letter code: Segregation and condensation protein A (294 aa).

It belongs to the ScpA family. As to quaternary structure, component of a cohesin-like complex composed of ScpA, ScpB and the Smc homodimer, in which ScpA and ScpB bind to the head domain of Smc. The presence of the three proteins is required for the association of the complex with DNA.

The protein resides in the cytoplasm. Functionally, participates in chromosomal partition during cell division. May act via the formation of a condensin-like complex containing Smc and ScpB that pull DNA away from mid-cell into both cell halves. In Ureaplasma parvum serovar 3 (strain ATCC 700970), this protein is Segregation and condensation protein A.